The primary structure comprises 357 residues: Dual-specificity RNA methyltransferase RlmN (357 aa).

Glu-89 serves as the catalytic Proton acceptor. The region spanning 109 to 340 is the Radical SAM core domain; it reads EGEKYTVCVS…CTIRESKALD (232 aa). A disulfide bridge links Cys-116 with Cys-345. [4Fe-4S] cluster contacts are provided by Cys-123, Cys-127, and Cys-130. S-adenosyl-L-methionine is bound by residues 173–174, Ser-203, 226–228, and Asn-302; these read GE and SLH. The active-site S-methylcysteine intermediate is Cys-345.

It belongs to the radical SAM superfamily. RlmN family. It depends on [4Fe-4S] cluster as a cofactor.

It localises to the cytoplasm. It carries out the reaction adenosine(2503) in 23S rRNA + 2 reduced [2Fe-2S]-[ferredoxin] + 2 S-adenosyl-L-methionine = 2-methyladenosine(2503) in 23S rRNA + 5'-deoxyadenosine + L-methionine + 2 oxidized [2Fe-2S]-[ferredoxin] + S-adenosyl-L-homocysteine. The enzyme catalyses adenosine(37) in tRNA + 2 reduced [2Fe-2S]-[ferredoxin] + 2 S-adenosyl-L-methionine = 2-methyladenosine(37) in tRNA + 5'-deoxyadenosine + L-methionine + 2 oxidized [2Fe-2S]-[ferredoxin] + S-adenosyl-L-homocysteine. Functionally, specifically methylates position 2 of adenine 2503 in 23S rRNA and position 2 of adenine 37 in tRNAs. m2A2503 modification seems to play a crucial role in the proofreading step occurring at the peptidyl transferase center and thus would serve to optimize ribosomal fidelity. This Helicobacter pylori (strain G27) protein is Dual-specificity RNA methyltransferase RlmN.